A 794-amino-acid polypeptide reads, in one-letter code: Solute carrier family 26 member 9 (794 aa).

At 1–70 (MNKVRPRYII…WLPKYNIKGN (70 aa)) the chain is on the cytoplasmic side. Residues 71–96 (LLNDALGGISAGTIQIPQGMAFALLA) traverse the membrane as a helical segment. At 97–100 (NLPP) the chain is on the extracellular side. A helical membrane pass occupies residues 101-109 (VNGLYSSFF). Residues 110 to 129 (PLVVYFFMGGIPQMVPGTFA) lie on the Cytoplasmic side of the membrane. Residues 130 to 142 (VISIIVGNVCLKL) form a helical membrane-spanning segment. Residues 143 to 160 (APESHFQNVTSNGTITNI) lie on the Extracellular side of the membrane. A helical membrane pass occupies residues 161-189 (EAMNTARMHISATLACLTAIIQIALSFVQ). The Cytoplasmic portion of the chain corresponds to 190-199 (FGFVAIYLSE). The helical transmembrane segment at 200 to 222 (SFIRGFMTAAGLQILISVLKYIF) threads the bilayer. At 223-235 (GVSIPPYSGVLAI) the chain is on the extracellular side. Residues 236-244 (IYTFIDICK) constitute an intramembrane region (helical). Topologically, residues 245–252 (ELPKTNVA) are extracellular. Residues 253-273 (SLIFALISTVLLIIVKELNMK) form a helical membrane-spanning segment. At 274–284 (FMHKIRFPIPM) the chain is on the cytoplasmic side. The helical transmembrane segment at 285–297 (EIIIVIVATAVSG) threads the bilayer. The Extracellular segment spans residues 298–332 (SFKLPERYHMNVVGHIPLGFPSPTVPNVTQWDEMV). Residues 333–356 (GTAFSLAIVGYVINLAMGRTLGAK) traverse the membrane as a helical segment. Residues 357–363 (HGFDVDA) lie on the Cytoplasmic side of the membrane. Residues 364–377 (NQEMLALGSGNFFG) traverse the membrane as a helical segment. The Extracellular segment spans residues 378-388 (SFFFIHVICCA). The helical transmembrane segment at 389-398 (LSVTLAVDGA) threads the bilayer. The Cytoplasmic portion of the chain corresponds to 399–403 (GGKSQ). Residues 404–417 (IASFFVMMSVMVTI) form a helical membrane-spanning segment. The Extracellular segment spans residues 418 to 429 (LALGTYLNPLPK). The helical transmembrane segment at 430 to 455 (SVLGALIAVNLKNSLKQLSDPFYLWK) threads the bilayer. The Cytoplasmic segment spans residues 456–459 (KSKL). A helical transmembrane segment spans residues 460–474 (DCLVWLVSFFSTFIL). Residues 475–477 (GLP) lie on the Extracellular side of the membrane. Residues 478–496 (YGLAVGVAFSILVVIFNTQ) traverse the membrane as a helical segment. At 497-794 (FRNGSSLNQV…MFQTEIQTAL (298 aa)) the chain is on the cytoplasmic side. Residues 517-739 (VYSKVQPIDG…ITVHDAVLYA (223 aa)) form the STAS domain.

Belongs to the SLC26A/SulP transporter (TC 2.A.53) family. In terms of assembly, homodimer.

The protein resides in the cell membrane. The protein localises to the endomembrane system. It carries out the reaction chloride(in) = chloride(out). The catalysed reaction is hydrogencarbonate(in) + chloride(out) = hydrogencarbonate(out) + chloride(in). Inhibited by ammonium and thiosulfate. In terms of biological role, ion transporter that can act both as an ion channel and anion exchanger. Mainly acts as a chloride channel, which mediate uncoupled chloride anion transport in an alternate-access mechanism where a saturable binding site is alternately exposed to either one or the other side of the membrane. Also acts as a DIDS- and thiosulfate- sensitive anion exchanger the exchange of chloride for bicarbonate ions across the cell membrane. This is Solute carrier family 26 member 9 (slc26a9) from Xenopus tropicalis (Western clawed frog).